We begin with the raw amino-acid sequence, 289 residues long: MRKLTSFACGTGAGLAAYYLQRLRDPQTAVQNSWTHSDKPVDPWALWDTNWDCREPRALVRPLRNSQPEEENRYNAELEKAKAKKARHIILVRHGEYLDVGDSDDTHHLTERGRKQAEFTGKRLCELGIKWDKVVASTMMRAQETSDIILKQIDFEKEKVVNCAFLREGAPIPPQPPVGHWKPEASQFLRDGSRIEAGFRRYFHRAYPDQEKESYTLIVGHGNVIRYFVCRALQFPAEGWLRININHASITWLTISPSGNVSIKYLGDSGFMPAELLTNRIPRDVKNVV.

The helical transmembrane segment at 7-23 (FACGTGAGLAAYYLQRL) threads the bilayer.

Belongs to the phosphoglycerate mutase family. BPG-dependent PGAM subfamily. In terms of assembly, interacts with Pk92B/ASK1.

Its subcellular location is the mitochondrion outer membrane. It carries out the reaction O-phospho-L-seryl-[protein] + H2O = L-seryl-[protein] + phosphate. The catalysed reaction is O-phospho-L-threonyl-[protein] + H2O = L-threonyl-[protein] + phosphate. In terms of biological role, displays phosphatase activity for serine/threonine residues, and dephosphorylates and activates Pk92B kinase. Has apparently no phosphoglycerate mutase activity. This Drosophila sechellia (Fruit fly) protein is Serine/threonine-protein phosphatase Pgam5, mitochondrial.